A 154-amino-acid polypeptide reads, in one-letter code: SsrA-binding protein (154 aa).

The segment at 134–154 (QREDLKRRAEDRDTQRELARF) is disordered.

It belongs to the SmpB family.

It is found in the cytoplasm. Functionally, required for rescue of stalled ribosomes mediated by trans-translation. Binds to transfer-messenger RNA (tmRNA), required for stable association of tmRNA with ribosomes. tmRNA and SmpB together mimic tRNA shape, replacing the anticodon stem-loop with SmpB. tmRNA is encoded by the ssrA gene; the 2 termini fold to resemble tRNA(Ala) and it encodes a 'tag peptide', a short internal open reading frame. During trans-translation Ala-aminoacylated tmRNA acts like a tRNA, entering the A-site of stalled ribosomes, displacing the stalled mRNA. The ribosome then switches to translate the ORF on the tmRNA; the nascent peptide is terminated with the 'tag peptide' encoded by the tmRNA and targeted for degradation. The ribosome is freed to recommence translation, which seems to be the essential function of trans-translation. This Nitratidesulfovibrio vulgaris (strain ATCC 29579 / DSM 644 / CCUG 34227 / NCIMB 8303 / VKM B-1760 / Hildenborough) (Desulfovibrio vulgaris) protein is SsrA-binding protein.